We begin with the raw amino-acid sequence, 49 residues long: MAVKDYYKVQGDSVTRLKQFCPRCGPGVFLADHKNRLACGKCGYTEFKK.

4 residues coordinate Zn(2+): Cys21, Cys24, Cys39, and Cys42. The segment at Cys21–Cys42 adopts a C4-type zinc-finger fold.

The protein belongs to the eukaryotic ribosomal protein eS31 family. As to quaternary structure, part of the 30S ribosomal subunit. Requires Zn(2+) as cofactor.

The sequence is that of Small ribosomal subunit protein eS31 from Methanosarcina mazei (strain ATCC BAA-159 / DSM 3647 / Goe1 / Go1 / JCM 11833 / OCM 88) (Methanosarcina frisia).